The chain runs to 723 residues: DNA-binding protein RFX2 (723 aa).

The disordered stretch occupies residues 1-46 (MQNSEGGADSPASVALRPSAAAPPVPASPQRVLVQAASSNPKGAQM). Positions 10 to 20 (SPASVALRPSA) are enriched in low complexity. At Ser-28 the chain carries Phosphoserine. The segment at residues 199 to 274 (HLQWLLDNYE…YHYYGIRLKP (76 aa)) is a DNA-binding region (RFX-type winged-helix). A disordered region spans residues 292 to 332 (QQPMHQKPRYRPAQKTDSLGDSGSHSGLHSTPEQTMAVQSQ). Over residues 308 to 321 (DSLGDSGSHSGLHS) the composition is skewed to low complexity. The segment covering 322–332 (TPEQTMAVQSQ) has biased composition (polar residues). Residue Ser-416 is modified to Phosphoserine. The tract at residues 688 to 723 (MGDEQRGSEAGPDARSLGEPLVKRERSDPNHSLQGI) is disordered.

It belongs to the RFX family. As to quaternary structure, homodimer; probably only forms homodimers in testis. Heterodimer; heterodimerizes with RFX1 and RFX3.

It localises to the nucleus. It is found in the cytoplasm. Transcription factor that acts as a key regulator of spermatogenesis. Acts by regulating expression of genes required for the haploid phase during spermiogenesis, such as genes required for cilium assembly and function. Recognizes and binds the X-box, a regulatory motif with DNA sequence 5'-GTNRCC(0-3N)RGYAAC-3' present on promoters. Probably activates transcription of the testis-specific histone gene H1-6. The sequence is that of DNA-binding protein RFX2 (RFX2) from Homo sapiens (Human).